A 441-amino-acid polypeptide reads, in one-letter code: UDP-N-acetylmuramoylalanine--D-glutamate ligase (441 aa).

129 to 135 (GTNGKST) serves as a coordination point for ATP.

It belongs to the MurCDEF family.

The protein resides in the cytoplasm. It carries out the reaction UDP-N-acetyl-alpha-D-muramoyl-L-alanine + D-glutamate + ATP = UDP-N-acetyl-alpha-D-muramoyl-L-alanyl-D-glutamate + ADP + phosphate + H(+). The protein operates within cell wall biogenesis; peptidoglycan biosynthesis. Functionally, cell wall formation. Catalyzes the addition of glutamate to the nucleotide precursor UDP-N-acetylmuramoyl-L-alanine (UMA). The polypeptide is UDP-N-acetylmuramoylalanine--D-glutamate ligase (Zymomonas mobilis subsp. mobilis (strain ATCC 31821 / ZM4 / CP4)).